A 726-amino-acid polypeptide reads, in one-letter code: Catalase-peroxidase (726 aa).

The segment covering 1 to 12 has biased composition (polar residues); sequence MSTPSDQHNTLS. Residues 1 to 34 form a disordered region; that stretch reads MSTPSDQHNTLSAGKCPFHQGNSNQTAGGGTSSR. Positions 105–226 form a cross-link, tryptophyl-tyrosyl-methioninium (Trp-Tyr) (with M-252); it reads WHSAGTYRSA…LGATEMGLIY (122 aa). Histidine 106 (proton acceptor) is an active-site residue. A cross-link (tryptophyl-tyrosyl-methioninium (Tyr-Met) (with W-105)) is located at residues 226-252; sequence YVNPEGPNHSGDPASAAPAIRATFGNM. Heme b is bound at residue histidine 267.

Belongs to the peroxidase family. Peroxidase/catalase subfamily. Homodimer or homotetramer. Heme b serves as cofactor. In terms of processing, formation of the three residue Trp-Tyr-Met cross-link is important for the catalase, but not the peroxidase activity of the enzyme.

It carries out the reaction H2O2 + AH2 = A + 2 H2O. The enzyme catalyses 2 H2O2 = O2 + 2 H2O. Functionally, bifunctional enzyme with both catalase and broad-spectrum peroxidase activity. The protein is Catalase-peroxidase of Cronobacter sakazakii (strain ATCC BAA-894) (Enterobacter sakazakii).